The following is a 745-amino-acid chain: MEVMNLIEQPIKVTEWQQTYTYDSGIHSGANTCVPSLSSKGLIEEDEACGRQYTLKKTTTYTQSVPPGQGDLEYQMSTTARAKRVREAMCPGVTGEDSSLLLTTQVEGQTTNLQRLAEPSQLLKSAIVHLINYQDDAELATRALPELTKLLNDEDPVVVTKAAMIVNQLSKKEASRRALMGSPQLVAAVVRTMQNTSDLDTARCTTSILHNLSHHREGLLAIFKSGGIPALVRMLSSPVESVLFYAITTLHNLLLYQEGAKMAVRLADGLQKMVPLLNKNNPKFLAITTDCLQLLAYGNQESKLIILANGGPQALVQIMRNYSYEKLLWTTSRVLKVLSVCPSNKPAIVEAGGMQALGKHLTSNSPRLVQNCLWTLRNLSDVATKQEGLESVLKILVNQLSVDDVNVLTCATGTLSNLTCNNSKNKTLVTQNSGVEALIHAILRAGDKDDITEPAVCALRHLTSRHPEAEMAQNSVRLNYGIPAIVKLLNQPNQWPLVKATIGLIRNLALCPANHAPLQEAAVIPRLVQLLVKAHQDAQRHVAAGTQQPYTDGVRMEEIVEGCTGALHILARDPMNRMEIFRLNTIPLFVQLLYSSVENIQRVAAGVLCELAQDKEAADAIDAEGASAPLMELLHSRNEGTATYAAAVLFRISEDKNPDYRKRVSVELTNSLFKHDPAAWEAAQSMIPMNEPYADDMDATYRPMYSSDVPMDPLEMHMDMDGDYPIDTYSDGLRPPYATADHMLA.

At Met1 the chain carries N-acetylmethionine. The O-linked (GlcNAc) threonine glycan is linked to Thr14. 2 positions are modified to phosphoserine: Ser99 and Ser125. 12 ARM repeats span residues Asn132–Lys171, Lys172–His215, Arg216–Leu255, Glu258–Tyr297, Gly298–Cys341, Pro342–Asp381, Ala383–Cys420, Ser423–Ser464, Glu470–Leu510, Pro512–Thr551, Pro574–Gln613, and Lys615–Arg661. An interaction with DSC1 and DSG1 region spans residues Asn132 to Tyr297. Ser182 carries the phosphoserine modification. Residues Pro574–Arg661 are interaction with DSC1. Residues Ser665 and Ser730 each carry the phosphoserine modification.

Belongs to the beta-catenin family. In terms of assembly, homodimer. Component of an E-cadherin/catenin adhesion complex composed of at least E-cadherin/CDH1 and gamma-catenin/JUP, and possibly alpha-catenin/CTNNA1; the complex is located to adherens junctions. The stable association of CTNNA1 is controversial as CTNNA1 was shown not to bind to F-actin when assembled in the complex. Interacts with MUC1. Interacts with CAV1. Interacts with PTPRJ. Interacts with DSG1. Interacts with DSC1 and DSC2. Interacts with PKP2. Interacts with PKP3 (via N-terminus); the interaction is required for PKP3 localization to desmosome cell-cell junctions. Interacts with DSG4. In terms of processing, may be phosphorylated by FER.

It localises to the cell junction. The protein localises to the adherens junction. The protein resides in the desmosome. Its subcellular location is the cytoplasm. It is found in the cytoskeleton. It localises to the cell membrane. The protein localises to the nucleus. Functionally, common junctional plaque protein. The membrane-associated plaques are architectural elements in an important strategic position to influence the arrangement and function of both the cytoskeleton and the cells within the tissue. The presence of plakoglobin in both the desmosomes and in the intermediate junctions suggests that it plays a central role in the structure and function of submembranous plaques. Acts as a substrate for VE-PTP and is required by it to stimulate VE-cadherin function in endothelial cells. Can replace beta-catenin in E-cadherin/catenin adhesion complexes which are proposed to couple cadherins to the actin cytoskeleton. The chain is Junction plakoglobin from Bos taurus (Bovine).